Reading from the N-terminus, the 177-residue chain is Actinorhodin polyketide dimerase (177 aa).

It to S.pristinaespiralis SnaC.

Its pathway is antibiotic biosynthesis; actinorhodin biosynthesis. The chain is Actinorhodin polyketide dimerase (actVB) from Streptomyces coelicolor (strain ATCC BAA-471 / A3(2) / M145).